The sequence spans 245 residues: Probable transcriptional regulatory protein BF2589 (245 aa).

The segment at glutamate 225–glutamate 245 is disordered.

The protein belongs to the TACO1 family.

It is found in the cytoplasm. The chain is Probable transcriptional regulatory protein BF2589 from Bacteroides fragilis (strain ATCC 25285 / DSM 2151 / CCUG 4856 / JCM 11019 / LMG 10263 / NCTC 9343 / Onslow / VPI 2553 / EN-2).